Reading from the N-terminus, the 1325-residue chain is MGVSFKISKVGRKFRPKISTELATPDSPKAIVLSGKPKATDDSNIGDVSGFSKPSLPDISPDHEVSFILSLYPNGYSIGKTSEAMQQISFRDVPKVLHPYDRAAEGLLSAIEAGRLPGDILEDIPCKFVDGVVICEVHDYRKHTSSQVSPVINKLRLKMSLENVVKDIPSMSDNSWTYGDLMEVESRILKALQPELCLDPLPRLDRLSKNPLTAKLDLSLSTLRRKRLRQMAEVTVMSQNKIQGKKVCIDRLPESSERGNLPGHLIMQQTNNNQAIQNLGTNMLAGLRSQPLQDAPNSSLALVPPQQQRYMGIGSTRNTQDQGSNSVSVSGASPGGLDAMLPYGSDSMNPGTSFHRKRESQEGQMSSMPGLNKRTRVSHMGPDGVPQQQLGQRMDGLHGSDTNWKNTLLQHQDMLGRSIQYPNTSIQRFSPHQMEGVMNQEGGPMQFPASQQGGMKYTSKEEPFETGKIDGGTRNNIPGVGSDANDLDPRIQSRMPHNAFIRSNFPQTSWNVNPGQQIEKEPKKEEQFSRRISAQSPRLSAGGPPQSPLSSKSGEFSGGSMGTHYGAVAAAQKDKAVTSIPAIGATQSVGSSANEAMQQRQHQAQMAAKRRTNSLPKTQVISTVGSPVSVNTISVPVNARSPSVGPQTLGDHAILDRFSKIERVAARYQLNCKKHKVDEYSRRPRVYAKQPLTVCLSNLSNEEVFKDEDEALSKSIFGGSMNTYKTRVIHFGQMERVMQGSVPSFIPRNRTRLVMSEKAVDGTVAWYQGDVDEGDVFQAEDFLLALPNTHIADLLATQFKSLMAREGYMIEEHIMAKPNRGDTGPISSHPNSAGGYPRGYSANDMQQYGDAVAGQASGEASKHGNTGNTPNNSTQNILANARMVPPTNSQALQMSQGLLSGVSMPMQPQQLDPQQSALLSSHSQQKNQQSMFTQQQHPQMQRPSMILPTNPLSAINSMSQSSGMQPGGQMANKYSPLQLQMLQQQQQAAVQKKIMMGLGSGVGMGMGMGMGMGMGSMGNSIAGLGALGNQLNMAGRGMGGTGISSSMSVPGIGNMGQNPMNLNPASNLNAISQQLRSGALTPQQNALFTQIRMGMANRGGVMGAPQTGISGVSGTRQMHPSSAGLSMLDQNRANLQRAAAMGNMGPPKLMPGMMNLYMNQQQQQQQLQQQPQQQQLQHQQQLQQPMSQPSQQLAQSPQQQQQLQQHEQPQQAQQQQQATASPLQSVLSPPQVGSPSAGITQQQLQQSSPQQMSQRTPMSPQQVNQRTPMSPQISSGAMHPMSTSNLEGCPASPQLSSQTMGSVGSITNSPMELQGPKNNSAGNNS.

Polar residues-rich tracts occupy residues 313–331 (IGST…SVSG) and 504–515 (NFPQTSWNVNPG). Disordered regions lie at residues 313–371 (IGST…MPGL), 462–558 (EPFE…EFSG), 593–616 (ANEA…NSLP), 852–875 (VAGQ…NSTQ), and 1160–1325 (QQQQ…GNNS). Basic and acidic residues predominate over residues 518 to 529 (IEKEPKKEEQFS). Over residues 596 to 607 (AMQQRQHQAQMA) the composition is skewed to low complexity. Polar residues predominate over residues 863–875 (HGNTGNTPNNSTQ). Residues 1160–1224 (QQQQQQQLQQ…QQQATASPLQ (65 aa)) show a composition bias toward low complexity. A compositionally biased stretch (polar residues) spans 1225–1239 (SVLSPPQVGSPSAGI). A compositionally biased stretch (low complexity) spans 1240-1262 (TQQQLQQSSPQQMSQRTPMSPQQ). Polar residues-rich tracts occupy residues 1263–1286 (VNQR…TSNL) and 1293–1325 (PQLS…GNNS).

In terms of assembly, component of a red light-dependent nuclear complex made of PHL, PHYB and CO. Interacts directly with PHYB and CO; CO binding requires the presence of PHYB. In terms of tissue distribution, mostly expressed in cotyledons and leaves, both in mesophyll and vasculature cells. Also present in roots, hypocotyls and shoot apices.

The protein localises to the nucleus. It is found in the nuclear body. The protein resides in the cytoplasmic granule. It localises to the cytoplasm. In terms of biological role, triggers photoperiod-monitored flowering by repressing PHYB-dependent flowering negative regulation, probably through physical interactions with PHYB and CO. This Arabidopsis thaliana (Mouse-ear cress) protein is Protein PHYTOCHROME-DEPENDENT LATE-FLOWERING.